A 562-amino-acid polypeptide reads, in one-letter code: Long-chain-fatty-acid--CoA ligase (562 aa).

Tyr-213 to Ala-224 provides a ligand contact to ATP.

This sequence belongs to the ATP-dependent AMP-binding enzyme family. Mg(2+) is required as a cofactor.

The protein localises to the membrane. The catalysed reaction is a long-chain fatty acid + ATP + CoA = a long-chain fatty acyl-CoA + AMP + diphosphate. It functions in the pathway lipid metabolism; fatty acid beta-oxidation. Functionally, catalyzes the esterification, concomitant with transport, of exogenous long-chain fatty acids into metabolically active CoA thioesters for subsequent degradation or incorporation into phospholipids. This is Long-chain-fatty-acid--CoA ligase (fadD) from Yersinia pestis.